The following is an 822-amino-acid chain: AP-1 complex subunit gamma-1 (822 aa).

A compositionally biased stretch (polar residues) spans 593 to 604; the sequence is NGPSEIVQTNGE. Residues 593–627 are disordered; the sequence is NGPSEIVQTNGETEPAPLETKPPPSGPQPTSQAND. The region spanning 702 to 817 is the GAE domain; it reads PGIPSITAYS…QDLAEVNNFP (116 aa).

This sequence belongs to the adaptor complexes large subunit family. Adaptor protein complex 1 (AP-1) is a heterotetramer composed of two large adaptins (gamma-type subunit AP1G1 and beta-type subunit AP1B1), a medium adaptin (mu-type subunit AP1M1 or AP1M2) and a small adaptin (sigma-type subunit AP1S1 or AP1S2 or AP1S3). Interacts (via GAE domain) with RABEP1. Interacts with EPS15. Interacts with SYNRG/gamma-synergin. Interacts (via GAE domain) with AP1AR (via coiled-coil domain). Interacts with CLN3 (via dileucine motif); this interaction facilitates lysosomal targeting. Interacts (via GAE domain) with AFTPH/aftiphilin; the interaction is required to recruit AFTPH/aftiphilin to the perinuclear region of the cell. Widely expressed.

The protein resides in the golgi apparatus. It is found in the cytoplasmic vesicle. It localises to the clathrin-coated vesicle membrane. The protein localises to the cytoplasm. Its subcellular location is the perinuclear region. The protein resides in the clathrin-coated vesicle. It is found in the membrane. It localises to the clathrin-coated pit. Functionally, subunit of clathrin-associated adaptor protein complex 1 that plays a role in protein sorting in the late-Golgi/trans-Golgi network (TGN) and/or endosomes. The AP complexes mediate both the recruitment of clathrin to membranes and the recognition of sorting signals within the cytosolic tails of transmembrane cargo molecules. In association with AFTPH/aftiphilin in the aftiphilin/p200/gamma-synergin complex, involved in the trafficking of transferrin from early to recycling endosomes, and the membrane trafficking of furin and the lysosomal enzyme cathepsin D between the trans-Golgi network (TGN) and endosomes. The protein is AP-1 complex subunit gamma-1 (Ap1g1) of Mus musculus (Mouse).